The sequence spans 116 residues: Large ribosomal subunit protein uL18 (116 aa).

This sequence belongs to the universal ribosomal protein uL18 family. As to quaternary structure, part of the 50S ribosomal subunit; part of the 5S rRNA/L5/L18/L25 subcomplex. Contacts the 5S and 23S rRNAs.

In terms of biological role, this is one of the proteins that bind and probably mediate the attachment of the 5S RNA into the large ribosomal subunit, where it forms part of the central protuberance. The polypeptide is Large ribosomal subunit protein uL18 (Mycoplasma capricolum subsp. capricolum (strain California kid / ATCC 27343 / NCTC 10154)).